A 652-amino-acid chain; its full sequence is MRFSLAWKLLFLILTCKIETQVKCLKFDFPGFNVSNELELIRDNSYIVFGAIQVTPDVTGGPGGTIANQAGRALYKKPFRLWSKHKSATFNTTFVINISNKTDPGGEGLAFVLTPEETAPQNSSGMWLGMVNERTNRNNESRIVSVEFDTRKSHSDDLDGNHVALNVNNINSVVQESLSGRGIKIDSGLDLTAHVRYDGKNLSVYVSRNLDVFEQRNLVFSRAIDLSAYLPETVYVGFTASTSNFTELNCVRSWSFEGLKIDGDGNMLWLWITIPIVFIVGIGAFLGALYLRSRSKAGETNPDIEAELDNCAANPQKFKLRELKRATGNFGAENKLGQGGFGMVFKGKWQGRDIAVKRVSEKSHQGKQEFIAEITTIGNLNHRNLVKLLGWCYERKEYLLVYEYMPNGSLDKYLFLEDKSRSNLTWETRKNIITGLSQALEYLHNGCEKRILHRDIKASNVMLDSDFNAKLGDFGLARMIQQSEMTHHSTKEIAGTPGYMAPETFLNGRATVETDVYAFGVLMLEVVSGKKPSYVLVKDNQNNYNNSIVNWLWELYRNGTITDAADPGMGNLFDKEEMKSVLLLGLACCHPNPNQRPSMKTVLKVLTGETSPPDVPTERPAFVWPAMPPSFSDIDYSLTGSQINSLTELTGR.

Positions 1-20 (MRFSLAWKLLFLILTCKIET) are cleaved as a signal peptide. At 21-266 (QVKCLKFDFP…EGLKIDGDGN (246 aa)) the chain is on the extracellular side. The segment at 24 to 257 (CLKFDFPGFN…LNCVRSWSFE (234 aa)) is legume-lectin like. N-linked (GlcNAc...) asparagine glycans are attached at residues N33, N91, N97, N100, N122, N139, N201, and N244. A helical membrane pass occupies residues 267–287 (MLWLWITIPIVFIVGIGAFLG). The Cytoplasmic segment spans residues 288–652 (ALYLRSRSKA…INSLTELTGR (365 aa)). One can recognise a Protein kinase domain in the interval 330 to 622 (FGAENKLGQG…PDVPTERPAF (293 aa)). Residues 336–344 (LGQGGFGMV) and K357 contribute to the ATP site. D455 acts as the Proton acceptor in catalysis.

It in the C-terminal section; belongs to the protein kinase superfamily. Ser/Thr protein kinase family. This sequence in the N-terminal section; belongs to the leguminous lectin family.

The protein localises to the cell membrane. The enzyme catalyses L-seryl-[protein] + ATP = O-phospho-L-seryl-[protein] + ADP + H(+). The catalysed reaction is L-threonyl-[protein] + ATP = O-phospho-L-threonyl-[protein] + ADP + H(+). In Arabidopsis thaliana (Mouse-ear cress), this protein is Probable L-type lectin-domain containing receptor kinase S.5 (LECRKS5).